A 473-amino-acid polypeptide reads, in one-letter code: Photosystem II CP43 reaction center protein (473 aa).

Positions Met-1–Glu-14 are excised as a propeptide. Thr-15 is subject to N-acetylthreonine. At Thr-15 the chain carries Phosphothreonine. A run of 5 helical transmembrane segments spans residues Leu-69 to Ala-93, Leu-134 to Asn-155, Lys-178 to Thr-200, Lys-255 to Ser-275, and Trp-291 to Ala-312. Glu-367 serves as a coordination point for [CaMn4O5] cluster. The helical transmembrane segment at Arg-447–Pro-471 threads the bilayer.

This sequence belongs to the PsbB/PsbC family. PsbC subfamily. As to quaternary structure, PSII is composed of 1 copy each of membrane proteins PsbA, PsbB, PsbC, PsbD, PsbE, PsbF, PsbH, PsbI, PsbJ, PsbK, PsbL, PsbM, PsbT, PsbX, PsbY, PsbZ, Psb30/Ycf12, at least 3 peripheral proteins of the oxygen-evolving complex and a large number of cofactors. It forms dimeric complexes. Binds multiple chlorophylls and provides some of the ligands for the Ca-4Mn-5O cluster of the oxygen-evolving complex. It may also provide a ligand for a Cl- that is required for oxygen evolution. PSII binds additional chlorophylls, carotenoids and specific lipids. is required as a cofactor.

Its subcellular location is the plastid. The protein resides in the chloroplast thylakoid membrane. Functionally, one of the components of the core complex of photosystem II (PSII). It binds chlorophyll and helps catalyze the primary light-induced photochemical processes of PSII. PSII is a light-driven water:plastoquinone oxidoreductase, using light energy to abstract electrons from H(2)O, generating O(2) and a proton gradient subsequently used for ATP formation. The sequence is that of Photosystem II CP43 reaction center protein from Morus indica (Mulberry).